The following is a 242-amino-acid chain: Venom nerve growth factor 3 (242 aa).

The N-terminal stretch at 1-18 (MSMLCYTLIIAFLIGIWA) is a signal peptide. The propeptide occupies 19-125 (APKSEDNVPL…ALNRNIRSKR (107 aa)). Residues 48–66 (LKTSRNTDQRHPAPKKAED) show a composition bias toward basic and acidic residues. Residues 48–69 (LKTSRNTDQRHPAPKKAEDQEL) form a disordered region. Cystine bridges form between C139/C203, C181/C231, and C191/C233. N-linked (GlcNAc...) asparagine glycosylation occurs at N147.

The protein belongs to the NGF-beta family. As to quaternary structure, homodimer; non-covalently linked. As to expression, expressed by the venom gland.

The protein localises to the secreted. In terms of biological role, nerve growth factor is important for the development and maintenance of the sympathetic and sensory nervous systems. It stimulates division and differentiation of sympathetic and embryonic sensory neurons as well as basal forebrain cholinergic neurons in the brain. Its relevance in the snake venom is not clear. However, it has been shown to inhibit metalloproteinase-dependent proteolysis of platelet glycoprotein Ib alpha, suggesting a metalloproteinase inhibition to prevent metalloprotease autodigestion and/or protection against prey proteases. Binds a lipid between the two protein chains in the homodimer. The lipid-bound form promotes histamine relase from mouse mast cells, contrary to the lipid-free form. This is Venom nerve growth factor 3 from Demansia vestigiata (Lesser black whip snake).